We begin with the raw amino-acid sequence, 346 residues long: Acetylserotonin O-methyltransferase (346 aa).

S-adenosyl-L-methionine-binding positions include Tyr148, Trp165, Asp211, 236 to 238, and Lys253; that span reads GDF. His256 serves as the catalytic Proton donor/acceptor. Substrate is bound by residues Asp257, Asn303, and Gln307.

The protein belongs to the class I-like SAM-binding methyltransferase superfamily. Cation-independent O-methyltransferase family. As to quaternary structure, homodimer. Expressed in pineal gland and retina.

The enzyme catalyses N-acetylserotonin + S-adenosyl-L-methionine = melatonin + S-adenosyl-L-homocysteine + H(+). It functions in the pathway aromatic compound metabolism; melatonin biosynthesis; melatonin from serotonin: step 1/2. Its function is as follows. Catalyzes the transfer of a methyl group onto N-acetylserotonin, producing melatonin (N-acetyl-5-methoxytryptamine). This Gallus gallus (Chicken) protein is Acetylserotonin O-methyltransferase (ASMT).